The sequence spans 573 residues: Chromosomal replication initiator protein DnaA (573 aa).

Residues 1–85 (MSQNSSSLLE…TKVLSMRMGR (85 aa)) are domain I, interacts with DnaA modulators. Residues 85–231 (RSFSLAVSVE…TPAHNPNREV (147 aa)) are domain II. Residues 91 to 232 (VSVEPSRDGE…PAHNPNREVS (142 aa)) form a disordered region. Over residues 116–169 (PYPGQGPQSPQGQQGQQGQHPVQQEVRAHAPAPHQQGQHQAAQHQPPANQAPGQ) the composition is skewed to low complexity. Residues 178–191 (QASQSAGAWEQTHS) show a composition bias toward polar residues. Pro residues predominate over residues 202–213 (SPAPVEPPPQPA). The interval 232–448 (SLNPKYTFEN…GALIRVSAYS (217 aa)) is domain III, AAA+ region. Positions 276, 278, 279, and 280 each coordinate ATP. The interval 449 to 573 (SLINQPIDKE…TQLIKSRGRN (125 aa)) is domain IV, binds dsDNA.

This sequence belongs to the DnaA family. Oligomerizes as a right-handed, spiral filament on DNA at oriC.

Its subcellular location is the cytoplasm. Its function is as follows. Plays an essential role in the initiation and regulation of chromosomal replication. ATP-DnaA binds to the origin of replication (oriC) to initiate formation of the DNA replication initiation complex once per cell cycle. Binds the DnaA box (a 9 base pair repeat at the origin) and separates the double-stranded (ds)DNA. Forms a right-handed helical filament on oriC DNA; dsDNA binds to the exterior of the filament while single-stranded (ss)DNA is stabiized in the filament's interior. The ATP-DnaA-oriC complex binds and stabilizes one strand of the AT-rich DNA unwinding element (DUE), permitting loading of DNA polymerase. After initiation quickly degrades to an ADP-DnaA complex that is not apt for DNA replication. Binds acidic phospholipids. This is Chromosomal replication initiator protein DnaA from Corynebacterium efficiens (strain DSM 44549 / YS-314 / AJ 12310 / JCM 11189 / NBRC 100395).